A 290-amino-acid polypeptide reads, in one-letter code: Shikimate dehydrogenase (NADP(+)) (290 aa).

Residues 21 to 23 and T68 contribute to the shikimate site; that span reads SLS. The active-site Proton acceptor is the K72. Residue E84 participates in NADP(+) binding. Shikimate-binding residues include N93 and D108. Residues 132–136 and L230 contribute to the NADP(+) site; that span reads GYGGA. Y232 contributes to the shikimate binding site. NADP(+) is bound at residue G253.

Belongs to the shikimate dehydrogenase family. In terms of assembly, homodimer.

It catalyses the reaction shikimate + NADP(+) = 3-dehydroshikimate + NADPH + H(+). It participates in metabolic intermediate biosynthesis; chorismate biosynthesis; chorismate from D-erythrose 4-phosphate and phosphoenolpyruvate: step 4/7. Involved in the biosynthesis of the chorismate, which leads to the biosynthesis of aromatic amino acids. Catalyzes the reversible NADPH linked reduction of 3-dehydroshikimate (DHSA) to yield shikimate (SA). This is Shikimate dehydrogenase (NADP(+)) from Synechocystis sp. (strain ATCC 27184 / PCC 6803 / Kazusa).